A 295-amino-acid polypeptide reads, in one-letter code: Pyridoxal 5'-phosphate synthase subunit PdxS (295 aa).

Asp-25 is a binding site for D-ribose 5-phosphate. The active-site Schiff-base intermediate with D-ribose 5-phosphate is Lys-82. Gly-154 contributes to the D-ribose 5-phosphate binding site. Residue Arg-166 coordinates D-glyceraldehyde 3-phosphate. Residues Gly-215 and 236 to 237 (GS) each bind D-ribose 5-phosphate.

Belongs to the PdxS/SNZ family. In terms of assembly, in the presence of PdxT, forms a dodecamer of heterodimers.

The catalysed reaction is aldehydo-D-ribose 5-phosphate + D-glyceraldehyde 3-phosphate + L-glutamine = pyridoxal 5'-phosphate + L-glutamate + phosphate + 3 H2O + H(+). Its pathway is cofactor biosynthesis; pyridoxal 5'-phosphate biosynthesis. Its function is as follows. Catalyzes the formation of pyridoxal 5'-phosphate from ribose 5-phosphate (RBP), glyceraldehyde 3-phosphate (G3P) and ammonia. The ammonia is provided by the PdxT subunit. Can also use ribulose 5-phosphate and dihydroxyacetone phosphate as substrates, resulting from enzyme-catalyzed isomerization of RBP and G3P, respectively. This is Pyridoxal 5'-phosphate synthase subunit PdxS from Staphylococcus aureus (strain Mu3 / ATCC 700698).